The sequence spans 241 residues: Beta-nerve growth factor (241 aa).

An N-terminal signal peptide occupies residues 1-18; the sequence is MSMLFYTLITAFLIGVQA. A propeptide spanning residues 19 to 121 is cleaved from the precursor; that stretch reads EPYTDSNVPE…SFNRTHRSKR (103 aa). 3 N-linked (GlcNAc...) asparagine glycosylation sites follow: Asn-69, Asn-114, and Asn-166. 3 disulfide bridges follow: Cys-136–Cys-201, Cys-179–Cys-229, and Cys-189–Cys-231. A 1-acyl-sn-glycero-3-phospho-(1D-myo-inositol)-binding residues include Tyr-173 and Lys-209. Residue Lys-209 coordinates a 1-acyl-sn-glycero-3-phospho-L-serine.

This sequence belongs to the NGF-beta family. As to quaternary structure, homodimer. The homodimer interacts with a single NTRK1 chain. The homodimer interacts with a single NGFR chain. The NGF dimer interacts with a single SORCS2 chain (via extracellular domain). The NGF precursor (proNGF) binds to a receptor complex formed by SORT1 and NGFR, which leads to NGF endocytosis. Both mature NGF and the immature NGF precursor (proNGF) interact with SORCS2 and with the heterodimer formed by SORCS2 and NGFR (via extracellular domains). The NGF precursor (proNGF) has much higher affinity for SORCS2 than mature NGF. The NGF precursor (proNGF) has much higher affinity for SORT1 than mature NGF. Interacts with ADAM10 in a divalent cation-dependent manner. Interacts with SORCS3. In terms of tissue distribution, detected in the granule and pyramidal cell layer in the hippocampus.

Its subcellular location is the secreted. The protein resides in the endosome lumen. Nerve growth factor is important for the development and maintenance of the sympathetic and sensory nervous systems. Extracellular ligand for the NTRK1 and NGFR receptors, activates cellular signaling cascades to regulate neuronal proliferation, differentiation and survival. The immature NGF precursor (proNGF) functions as a ligand for the heterodimeric receptor formed by SORCS2 and NGFR, and activates cellular signaling cascades that lead to inactivation of RAC1 and/or RAC2, reorganization of the actin cytoskeleton and neuronal growth cone collapse. In contrast to mature NGF, the precursor form (proNGF) promotes neuronal apoptosis (in vitro). Inhibits metalloproteinase-dependent proteolysis of platelet glycoprotein VI. Binds lysophosphatidylinositol and lysophosphatidylserine between the two chains of the homodimer. The lipid-bound form promotes histamine relase from mast cells, contrary to the lipid-free form. The chain is Beta-nerve growth factor (Ngf) from Rattus norvegicus (Rat).